The following is a 260-amino-acid chain: MAITPTQLLDWKRQQRPIVALTAWDTAIASVLDAAGVEIILVGDSLGMVALGYETTLPVSLDTMIHHTAAVKRGVQRALVVCDLPFLTYQESPAQAMGSAGRVLQETGAQAVKLEGGHPRMVETVARLTEVGIPVMGHVGLTPQSVHQLGYRQQGQDPATAEKILHQAIALAEAGVFAIVLEHIPSELAASITEQLPIPTIGIGAGPQCDGQVLVTADLLGLTVKQPPFAPAYLNLRHTITETVHKFSGEVRQRQFPRRG.

Mg(2+) is bound by residues Asp-44 and Asp-83. 3-methyl-2-oxobutanoate-binding positions include 44–45, Asp-83, and Lys-113; that span reads DS. Mg(2+) is bound at residue Glu-115. Glu-182 functions as the Proton acceptor in the catalytic mechanism.

Belongs to the PanB family. In terms of assembly, homodecamer; pentamer of dimers. It depends on Mg(2+) as a cofactor.

Its subcellular location is the cytoplasm. It catalyses the reaction 3-methyl-2-oxobutanoate + (6R)-5,10-methylene-5,6,7,8-tetrahydrofolate + H2O = 2-dehydropantoate + (6S)-5,6,7,8-tetrahydrofolate. Its pathway is cofactor biosynthesis; (R)-pantothenate biosynthesis; (R)-pantoate from 3-methyl-2-oxobutanoate: step 1/2. In terms of biological role, catalyzes the reversible reaction in which hydroxymethyl group from 5,10-methylenetetrahydrofolate is transferred onto alpha-ketoisovalerate to form ketopantoate. In Synechocystis sp. (strain ATCC 27184 / PCC 6803 / Kazusa), this protein is 3-methyl-2-oxobutanoate hydroxymethyltransferase.